Reading from the N-terminus, the 744-residue chain is NAD(P)H-quinone oxidoreductase subunit 5, chloroplastic (744 aa).

16 consecutive transmembrane segments (helical) span residues 9–29, 40–60, 89–109, 125–145, 147–167, 185–205, 219–239, 258–278, 290–312, 327–347, 354–374, 396–416, 425–445, 549–569, 608–628, and 724–744; these read WIIPFLPLPVPMLIGLGLLLF, WAFQSVLLLSIVMIFSMNLSI, IDPLTSIMSILITTVGIMVLI, FAYMSFFSTSMLGLVTSSNLI, IYIFWELVGICSYLLIGFWFT, GDFGLLLGILGFYWITGSFEF, NEVNLLFVTLCAVLLFAGAIA, TPISALIHAATMVAAGIFLVA, IMNFISLIGIITVFLGATLALAQ, LGYMMLALGMGSYRSALFHLI, ALLFLGSGSVIHSMETLVGYC, TSFLLGTLSLCGIPPLACFWS, WLYSPIFAIIAWSTAGLTAFY, LFPILILVLFTLFVGFLGIPF, VFSVTISSFGIFIAFFLYKPV, and YLFFYFSYVSIFLVIYYFLNF.

Belongs to the complex I subunit 5 family. In terms of assembly, NDH is composed of at least 16 different subunits, 5 of which are encoded in the nucleus.

Its subcellular location is the plastid. The protein resides in the chloroplast thylakoid membrane. The catalysed reaction is a plastoquinone + NADH + (n+1) H(+)(in) = a plastoquinol + NAD(+) + n H(+)(out). It carries out the reaction a plastoquinone + NADPH + (n+1) H(+)(in) = a plastoquinol + NADP(+) + n H(+)(out). In terms of biological role, NDH shuttles electrons from NAD(P)H:plastoquinone, via FMN and iron-sulfur (Fe-S) centers, to quinones in the photosynthetic chain and possibly in a chloroplast respiratory chain. The immediate electron acceptor for the enzyme in this species is believed to be plastoquinone. Couples the redox reaction to proton translocation, and thus conserves the redox energy in a proton gradient. The polypeptide is NAD(P)H-quinone oxidoreductase subunit 5, chloroplastic (ndhF) (Adenocaulon himalaicum (Trailplant)).